A 118-amino-acid polypeptide reads, in one-letter code: UPF0102 protein RSal33209_1090 (118 aa).

It belongs to the UPF0102 family.

The protein is UPF0102 protein RSal33209_1090 of Renibacterium salmoninarum (strain ATCC 33209 / DSM 20767 / JCM 11484 / NBRC 15589 / NCIMB 2235).